Reading from the N-terminus, the 156-residue chain is Small ribosomal subunit protein uS7 (156 aa).

Belongs to the universal ribosomal protein uS7 family. In terms of assembly, part of the 30S ribosomal subunit. Contacts proteins S9 and S11.

One of the primary rRNA binding proteins, it binds directly to 16S rRNA where it nucleates assembly of the head domain of the 30S subunit. Is located at the subunit interface close to the decoding center, probably blocks exit of the E-site tRNA. This chain is Small ribosomal subunit protein uS7, found in Methylobacterium nodulans (strain LMG 21967 / CNCM I-2342 / ORS 2060).